We begin with the raw amino-acid sequence, 89 residues long: MAKASEHFFYVLKCSDNSYYGGYTTDVIRREAEHNAGIRCKYTKTRRPVKVIHFEKFETRSEATKAEAAFKKLSRKNKDAYLIQREESE.

One can recognise a GIY-YIG domain in the interval 5–80 (SEHFFYVLKC…KKLSRKNKDA (76 aa)).

It belongs to the UPF0213 family.

This is UPF0213 protein LMOf2365_0181 from Listeria monocytogenes serotype 4b (strain F2365).